The following is a 434-amino-acid chain: Adenylosuccinate synthetase (434 aa).

GTP-binding positions include 15 to 21 (GDEGKGK) and 43 to 45 (GHT). The active-site Proton acceptor is the Asp16. Mg(2+) is bound by residues Asp16 and Gly43. IMP is bound by residues 16 to 19 (DEGK), 41 to 44 (NAGH), Thr133, Arg147, Gln228, Thr243, and Arg307. His44 functions as the Proton donor in the catalytic mechanism. 303–309 (SVTGRAR) is a binding site for substrate. GTP is bound by residues Arg309, 335-337 (KLD), and 418-420 (STG).

This sequence belongs to the adenylosuccinate synthetase family. In terms of assembly, homodimer. It depends on Mg(2+) as a cofactor.

Its subcellular location is the cytoplasm. The catalysed reaction is IMP + L-aspartate + GTP = N(6)-(1,2-dicarboxyethyl)-AMP + GDP + phosphate + 2 H(+). The protein operates within purine metabolism; AMP biosynthesis via de novo pathway; AMP from IMP: step 1/2. In terms of biological role, plays an important role in the de novo pathway of purine nucleotide biosynthesis. Catalyzes the first committed step in the biosynthesis of AMP from IMP. In Neisseria gonorrhoeae (strain NCCP11945), this protein is Adenylosuccinate synthetase.